A 176-amino-acid chain; its full sequence is Inner membrane-spanning protein YciB (176 aa).

Transmembrane regions (helical) follow at residues 22–42 (IYYA…YTWL), 50–70 (VALI…YYHN), 81–101 (IYSL…KPLI), 121–141 (IAWA…AFWL), and 149–169 (FKVF…GIYI).

It belongs to the YciB family.

The protein localises to the cell inner membrane. Its function is as follows. Plays a role in cell envelope biogenesis, maintenance of cell envelope integrity and membrane homeostasis. This Sodalis glossinidius (strain morsitans) protein is Inner membrane-spanning protein YciB.